We begin with the raw amino-acid sequence, 331 residues long: uncharacterized protein (331 aa).

43–50 (GANESGKS) provides a ligand contact to ATP.

This is an uncharacterized protein from Methanocaldococcus jannaschii (strain ATCC 43067 / DSM 2661 / JAL-1 / JCM 10045 / NBRC 100440) (Methanococcus jannaschii).